Consider the following 308-residue polypeptide: Glutaminase (308 aa).

Substrate is bound by residues S66, N117, E161, N168, Y192, Y244, and V262.

The protein belongs to the glutaminase family. In terms of assembly, homotetramer.

It catalyses the reaction L-glutamine + H2O = L-glutamate + NH4(+). In Photorhabdus laumondii subsp. laumondii (strain DSM 15139 / CIP 105565 / TT01) (Photorhabdus luminescens subsp. laumondii), this protein is Glutaminase.